Here is a 469-residue protein sequence, read N- to C-terminus: Putative pyridoxal-dependent decarboxylase domain-containing protein 2 (469 aa).

Residues T12–K40 are a coiled coil. Positions E28–S44 are enriched in basic and acidic residues. Residues E28 to I47 are disordered.

The protein belongs to the group II decarboxylase family. The cofactor is pyridoxal 5'-phosphate.

This chain is Putative pyridoxal-dependent decarboxylase domain-containing protein 2 (PDXDC2P), found in Homo sapiens (Human).